Reading from the N-terminus, the 884-residue chain is Ubiquitin carboxyl-terminal hydrolase 20 (884 aa).

The UBP-type zinc finger occupies 6-109 (DFCPHLDSIG…SQTTSPRLSH (104 aa)). The Zn(2+) site is built by C8, H10, C30, C33, C43, C48, C53, H60, H64, H70, C83, and C86. Residues 95–142 (RGPPASQTTSPRLSHRDFPTSAHPLKSVPIAVGDDGESESDEDDIKPR) form a disordered region. A compositionally biased stretch (acidic residues) spans 128–138 (DDGESESDEDD). One can recognise a USP domain in the interval 145–655 (TGMKNIGNSC…EAYVLFYRKS (511 aa)). C154 (nucleophile) is an active-site residue. Disordered stretches follow at residues 247 to 296 (LKEP…GGGG) and 368 to 388 (HPVESISKHSSTPPRSSPLRT). The segment covering 264–274 (DDQREGERGGT) has biased composition (basic and acidic residues). The segment covering 286–296 (GEMGDGEGGGG) has biased composition (gly residues). Low complexity predominate over residues 376-388 (HSSTPPRSSPLRT). The Proton acceptor role is filled by H613. 2 DUSP domains span residues 657-750 (EEAE…LYVC) and 759-862 (ALAK…RQTV).

The protein belongs to the peptidase C19 family. USP20/USP33 subfamily.

Its subcellular location is the cytoplasm. It is found in the perinuclear region. It localises to the cytoskeleton. The protein localises to the microtubule organizing center. The protein resides in the centrosome. The catalysed reaction is Thiol-dependent hydrolysis of ester, thioester, amide, peptide and isopeptide bonds formed by the C-terminal Gly of ubiquitin (a 76-residue protein attached to proteins as an intracellular targeting signal).. Functionally, deubiquitinating enzyme involved in beta-2 adrenergic receptor (adrb2) recycling. Acts as a regulator of G-protein coupled receptor (GPCR) signaling by mediating the deubiquitination beta-2 adrenergic receptor (adrb2). Plays a central role in adrb2 recycling and resensitization after prolonged agonist stimulation by constitutively binding adrb2, mediating deubiquitination of adrb2 and inhibiting lysosomal trafficking of adrb2. Mediates deubiquitination of both 'Lys-48'- and 'Lys-63'-linked polyubiquitin chains. The sequence is that of Ubiquitin carboxyl-terminal hydrolase 20 (usp20) from Xenopus tropicalis (Western clawed frog).